The primary structure comprises 221 residues: Aspartic protease inhibitor 1 (221 aa).

The N-terminal stretch at 1–23 is a signal peptide; sequence MMKCLFFLCLCLFPILVFSSTFT. Positions 24–32 are excised as a propeptide; it reads SQNPINLPS. The Vacuolar targeting signal motif lies at 26–31; sequence NPINLP. Residue asparagine 51 is glycosylated (N-linked (GlcNAc...) asparagine). Intrachain disulfides connect cysteine 80–cysteine 125 and cysteine 174–cysteine 186.

This sequence belongs to the protease inhibitor I3 (leguminous Kunitz-type inhibitor) family. Tubers, young leaves and flower bud. Not detected in root, stem or mature leaves.

It localises to the vacuole. Its function is as follows. Inhibitor of cathepsin D (aspartic protease). May also inhibit trypsin and chymotrypsin (serine proteases). Protects the plant by inhibiting proteases of invading organisms. The polypeptide is Aspartic protease inhibitor 1 (Solanum tuberosum (Potato)).